The chain runs to 463 residues: Chaperone SurA (463 aa).

Positions 1–25 are cleaved as a signal peptide; the sequence is MTKPFSVVLASLLAITSTVSPLASA. 2 PpiC domains span residues 174-276 and 289-388; these read GSQY…KLVE and VTEY…QRVG. Disordered stretches follow at residues 329-348 and 431-463; these read ATAKESSEDTNSRGQGGDLG and YRTGDRADDNATAAPAKSPDPAAPSPPPAKPTR. Residues 441 to 450 are compositionally biased toward low complexity; that stretch reads ATAAPAKSPD. The span at 451 to 463 shows a compositional bias: pro residues; it reads PAAPSPPPAKPTR.

The protein localises to the periplasm. The enzyme catalyses [protein]-peptidylproline (omega=180) = [protein]-peptidylproline (omega=0). In terms of biological role, chaperone involved in the correct folding and assembly of outer membrane proteins. Recognizes specific patterns of aromatic residues and the orientation of their side chains, which are found more frequently in integral outer membrane proteins. May act in both early periplasmic and late outer membrane-associated steps of protein maturation. The sequence is that of Chaperone SurA from Xanthomonas axonopodis pv. citri (strain 306).